The chain runs to 124 residues: Small ribosomal subunit protein uS12 (124 aa).

Positions 1 to 23 are disordered; that stretch reads MATINQLVRKPRKRPVAKSDVPA. A 3-methylthioaspartic acid modification is found at Asp-89. A disordered region spans residues 101–124; the sequence is ALDTSGVQNRRQGRSKYGTKRPKS. The span at 111–124 shows a compositional bias: basic residues; it reads RQGRSKYGTKRPKS.

The protein belongs to the universal ribosomal protein uS12 family. Part of the 30S ribosomal subunit. Contacts proteins S8 and S17. May interact with IF1 in the 30S initiation complex.

In terms of biological role, with S4 and S5 plays an important role in translational accuracy. Its function is as follows. Interacts with and stabilizes bases of the 16S rRNA that are involved in tRNA selection in the A site and with the mRNA backbone. Located at the interface of the 30S and 50S subunits, it traverses the body of the 30S subunit contacting proteins on the other side and probably holding the rRNA structure together. The combined cluster of proteins S8, S12 and S17 appears to hold together the shoulder and platform of the 30S subunit. The protein is Small ribosomal subunit protein uS12 of Chromohalobacter salexigens (strain ATCC BAA-138 / DSM 3043 / CIP 106854 / NCIMB 13768 / 1H11).